Here is a 155-residue protein sequence, read N- to C-terminus: Small ribosomal subunit protein bS6 (155 aa).

Positions 94–155 (VKQEGPLPTP…TPELEEQVKS (62 aa)) are disordered. Polar residues predominate over residues 103-112 (PRSSNKSSNQ). The span at 113-141 (AEKKENENIDSANKSEPKADETDNKKKIT) shows a compositional bias: basic and acidic residues.

The protein belongs to the bacterial ribosomal protein bS6 family.

Functionally, binds together with bS18 to 16S ribosomal RNA. This Prochlorococcus marinus (strain MIT 9515) protein is Small ribosomal subunit protein bS6.